The following is a 231-amino-acid chain: Ribose-5-phosphate isomerase A (231 aa).

Residues 28–31, 83–86, and 96–99 each bind substrate; these read TGST, DGAD, and KGGG. E105 acts as the Proton acceptor in catalysis. K123 is a binding site for substrate.

It belongs to the ribose 5-phosphate isomerase family. In terms of assembly, homodimer.

The catalysed reaction is aldehydo-D-ribose 5-phosphate = D-ribulose 5-phosphate. It participates in carbohydrate degradation; pentose phosphate pathway; D-ribose 5-phosphate from D-ribulose 5-phosphate (non-oxidative stage): step 1/1. Catalyzes the reversible conversion of ribose-5-phosphate to ribulose 5-phosphate. In Agrobacterium fabrum (strain C58 / ATCC 33970) (Agrobacterium tumefaciens (strain C58)), this protein is Ribose-5-phosphate isomerase A.